Reading from the N-terminus, the 346-residue chain is DNA-directed RNA polymerases I and III subunit RPAC1 (346 aa).

Ala-2 carries the N-acetylalanine modification. Ser-4 carries the post-translational modification Phosphoserine.

The protein belongs to the archaeal Rpo3/eukaryotic RPB3 RNA polymerase subunit family. Component of the RNA polymerase I and RNA polymerase III complexes consisting of at least 13 and 17 subunits, respectively. Pol I complex consists of a ten-subunit catalytic core composed of POLR1A/RPA1, POLR1B/RPA2, POLR1C/RPAC1, POLR1D/RPAC2, POLR1H/RPA12, POLR2E/RPABC1, POLR2F/RPABC2, POLR2H/RPABC3, POLR2K/RPABC4 and POLR2L/RPABC5; a mobile stalk subunit POLR1F/RPA43 protruding from the core and additional subunits homologous to general transcription factors POLR1E/RPA49 and POLR1G/RPA34. Part of Pol I pre-initiation complex (PIC), in which Pol I core assembles with RRN3 and promoter-bound UTBF and SL1/TIF-IB complex. Pol III complex consists of a ten-subunit catalytic core composed of POLR3A/RPC1, POLR3B/RPC2, POLR1C/RPAC1, POLR1D/RPAC2, POLR3K/RPC10, POLR2E/RPABC1, POLR2F/RPABC2, POLR2H/RPABC3, POLR2K/RPABC4 and POLR2L/RPABC5; a mobile stalk composed of two subunits POLR3H/RPC8 and CRCP/RPC9, protruding from the core and functioning primarily in transcription initiation; and additional subunits homologous to general transcription factors of the RNA polymerase II machinery, POLR3C/RPC3-POLR3F/RPC6-POLR3G/RPC7 heterotrimer required for transcription initiation and POLR3D/RPC4-POLR3E/RPC5 heterodimer involved in both transcription initiation and termination.

It is found in the nucleus. Its subcellular location is the nucleolus. The protein localises to the cytoplasm. It localises to the cytosol. In terms of biological role, DNA-dependent RNA polymerase catalyzes the transcription of DNA into RNA using the four ribonucleoside triphosphates as substrates. Common component of RNA polymerases I and III which synthesize ribosomal RNA precursors and short non-coding RNAs including 5S rRNA, snRNAs, tRNAs and miRNAs, respectively. POLR1C/RPAC1 is part of the polymerase core and may function as a clamp element that moves to open and close the cleft. The chain is DNA-directed RNA polymerases I and III subunit RPAC1 from Homo sapiens (Human).